We begin with the raw amino-acid sequence, 293 residues long: Carbapenem-hydrolyzing beta-lactamase KPC (293 aa).

The signal sequence occupies residues 1 to 24; sequence MSLYRRLVLLSCLSWPLAGFSATA. Catalysis depends on Ser69, which acts as the Acyl-ester intermediate. The active-site Proton acceptor is Glu167. 233–235 contributes to the substrate binding site; it reads KTG.

Belongs to the class-A beta-lactamase family.

It carries out the reaction a beta-lactam + H2O = a substituted beta-amino acid. Not inhibited by EDTA, inhibited by clavulanic acid and tazobactam. Its function is as follows. Hydrolyzes carbapenems, penicillins, cephalosporins and aztreonam with varying efficiency. This chain is Carbapenem-hydrolyzing beta-lactamase KPC (bla), found in Klebsiella oxytoca.